A 181-amino-acid chain; its full sequence is Transcriptional repressor NrdR (181 aa).

Residues 3-34 (CPFCRHPDSRVVDSREAEEGSAIRRRRSCLSC) fold into a zinc finger. The region spanning 46–136 (LQVRKRSGAA…VYLAFESLTD (91 aa)) is the ATP-cone domain. Residues 148-181 (AAGPPTTRDGPARPVPRGAVDVSPVIGTQQVHSR) form a disordered region.

It belongs to the NrdR family. Zn(2+) is required as a cofactor.

Its function is as follows. Negatively regulates transcription of bacterial ribonucleotide reductase nrd genes and operons by binding to NrdR-boxes. In Frankia casuarinae (strain DSM 45818 / CECT 9043 / HFP020203 / CcI3), this protein is Transcriptional repressor NrdR.